Reading from the N-terminus, the 823-residue chain is MSTAQRRVQELEKLILHHQDRYYNAESDISDDAFDALWEELARLDPGNPLLKAIGSDSQRDAVKKRHIVPMGSQHKAADEESFSAWAKKNALQAFLVQHKLDGVSLELQYERGHFCCALTRGNGIVGDDVTANVRGMRGFVPTLTAEWGPCGNLPFTGGVRGEVIMHKDIHRSHYPTHANCRNTVNGILKRKDGRGRTHLHIVCYDAVPGTPGKPFTGSLPFADETEKLAWLARQGFVTVHSHRCANAQEVVALRSEIMRTRELLPYSIDGLVVKSTDLDFQDAQLPRPKKQIAFKFSTQEAITTLRDVQWQTSGVTYTPIGITDPVRLAGTTVKRANLCNPNMLTKLCLKIGSHVLISKRGEIIPKIEALVSTPAHAQEIHIPTQCTSCNTVLENSGSRLFCPNVNCPLLSHHRITRWIECLEIKHVGTELIQRLFEEKKVRRIPDLYTLTCEDLIEIEHVGNATAKKILEAIHHKKEIALQTFIAGFGIEGIGETMGEKLICAGFDTLEKVLHATTETLESIYQFGTELAKSVVTGIARVKDDMCELLDRGFVRILAKQQAESPLRGKSFCFSGSLRNGDRATIHRIRALGGVVRTSVTRDLSYLIFESLSQPYRTAQKLKKEQGVALEIISEDEFCRLLDQASASCTHTGETVHPLQGKSFYFSGASRSMNHKHAQEKVRALGGDVASSVTAQLDYLVFYSQSTRYRTACALGIQIISEETLHKLIATAQSPLHTDAHVHAPLHGMSFCFSGDLDGMTRAQAIALVQRLGGTVKTAVSTQLTYLVSNDPHGQSRKCQNAVRCGVRIISEHVFLALCTPGT.

Residues 31 to 35 (DDAFD) and 73 to 74 (SQ) contribute to the NAD(+) site. Lysine 100 serves as the catalytic N6-AMP-lysine intermediate. NAD(+) contacts are provided by arginine 121, glutamate 163, lysine 275, and lysine 296. Residues cysteine 387, cysteine 390, cysteine 403, and cysteine 408 each contribute to the Zn(2+) site. 3 BRCT domains span residues 562-655 (QAES…TGET), 654-742 (ETVH…DAHV), and 741-823 (HVHA…TPGT).

It belongs to the NAD-dependent DNA ligase family. LigA subfamily. Mg(2+) is required as a cofactor. The cofactor is Mn(2+).

The catalysed reaction is NAD(+) + (deoxyribonucleotide)n-3'-hydroxyl + 5'-phospho-(deoxyribonucleotide)m = (deoxyribonucleotide)n+m + AMP + beta-nicotinamide D-nucleotide.. DNA ligase that catalyzes the formation of phosphodiester linkages between 5'-phosphoryl and 3'-hydroxyl groups in double-stranded DNA using NAD as a coenzyme and as the energy source for the reaction. It is essential for DNA replication and repair of damaged DNA. The polypeptide is DNA ligase (Treponema pallidum (strain Nichols)).